The following is a 177-amino-acid chain: Sec-independent protein translocase protein TatB (177 aa).

The helical transmembrane segment at 1–21 (MFDFAWSEIAVIGVVALVVIG) threads the bilayer. A compositionally biased stretch (basic and acidic residues) spans 136–146 (REKTVSSETAR). The interval 136-177 (REKTVSSETARRAATAPAFIPPGEAFRSARRAPAFIPPADQG) is disordered.

This sequence belongs to the TatB family. As to quaternary structure, the Tat system comprises two distinct complexes: a TatABC complex, containing multiple copies of TatA, TatB and TatC subunits, and a separate TatA complex, containing only TatA subunits. Substrates initially bind to the TatABC complex, which probably triggers association of the separate TatA complex to form the active translocon.

The protein localises to the cell inner membrane. Functionally, part of the twin-arginine translocation (Tat) system that transports large folded proteins containing a characteristic twin-arginine motif in their signal peptide across membranes. Together with TatC, TatB is part of a receptor directly interacting with Tat signal peptides. TatB may form an oligomeric binding site that transiently accommodates folded Tat precursor proteins before their translocation. In Granulibacter bethesdensis (strain ATCC BAA-1260 / CGDNIH1), this protein is Sec-independent protein translocase protein TatB.